Reading from the N-terminus, the 143-residue chain is ATP synthase subunit b' (143 aa).

The chain crosses the membrane as a helical span at residues 6-26 (ATLPLMALQFLVLAVVLNAVF).

It belongs to the ATPase B chain family. As to quaternary structure, F-type ATPases have 2 components, F(1) - the catalytic core - and F(0) - the membrane proton channel. F(1) has five subunits: alpha(3), beta(3), gamma(1), delta(1), epsilon(1). F(0) has four main subunits: a(1), b(1), b'(1) and c(10-14). The alpha and beta chains form an alternating ring which encloses part of the gamma chain. F(1) is attached to F(0) by a central stalk formed by the gamma and epsilon chains, while a peripheral stalk is formed by the delta, b and b' chains.

It localises to the cellular thylakoid membrane. Its function is as follows. F(1)F(0) ATP synthase produces ATP from ADP in the presence of a proton or sodium gradient. F-type ATPases consist of two structural domains, F(1) containing the extramembraneous catalytic core and F(0) containing the membrane proton channel, linked together by a central stalk and a peripheral stalk. During catalysis, ATP synthesis in the catalytic domain of F(1) is coupled via a rotary mechanism of the central stalk subunits to proton translocation. In terms of biological role, component of the F(0) channel, it forms part of the peripheral stalk, linking F(1) to F(0). The b'-subunit is a diverged and duplicated form of b found in plants and photosynthetic bacteria. The sequence is that of ATP synthase subunit b' from Gloeothece citriformis (strain PCC 7424) (Cyanothece sp. (strain PCC 7424)).